A 431-amino-acid polypeptide reads, in one-letter code: 3-phosphoshikimate 1-carboxyvinyltransferase (431 aa).

Positions 21, 22, and 26 each coordinate 3-phosphoshikimate. Residue Lys21 participates in phosphoenolpyruvate binding. The phosphoenolpyruvate site is built by Gly93 and Arg122. 3-phosphoshikimate is bound by residues Ser167, Gln169, Asp318, and Lys345. Gln169 lines the phosphoenolpyruvate pocket. Catalysis depends on Asp318, which acts as the Proton acceptor. Residues Arg349 and Arg391 each contribute to the phosphoenolpyruvate site.

This sequence belongs to the EPSP synthase family. As to quaternary structure, monomer.

It localises to the cytoplasm. The enzyme catalyses 3-phosphoshikimate + phosphoenolpyruvate = 5-O-(1-carboxyvinyl)-3-phosphoshikimate + phosphate. The protein operates within metabolic intermediate biosynthesis; chorismate biosynthesis; chorismate from D-erythrose 4-phosphate and phosphoenolpyruvate: step 6/7. In terms of biological role, catalyzes the transfer of the enolpyruvyl moiety of phosphoenolpyruvate (PEP) to the 5-hydroxyl of shikimate-3-phosphate (S3P) to produce enolpyruvyl shikimate-3-phosphate and inorganic phosphate. The chain is 3-phosphoshikimate 1-carboxyvinyltransferase from Roseiflexus castenholzii (strain DSM 13941 / HLO8).